Here is an 838-residue protein sequence, read N- to C-terminus: Protein translocase subunit SecA 1 (838 aa).

ATP-binding positions include Gln-85, 103 to 107 (GEGKT), and Asp-493. Positions 823, 825, 834, and 835 each coordinate Zn(2+).

It belongs to the SecA family. Monomer and homodimer. Part of the essential Sec protein translocation apparatus which comprises SecA, SecYEG and auxiliary proteins SecDF. Other proteins may also be involved. Zn(2+) serves as cofactor.

The protein resides in the cell membrane. The protein localises to the cytoplasm. It catalyses the reaction ATP + H2O + cellular proteinSide 1 = ADP + phosphate + cellular proteinSide 2.. Its function is as follows. Part of the Sec protein translocase complex. Interacts with the SecYEG preprotein conducting channel. Has a central role in coupling the hydrolysis of ATP to the transfer of proteins into and across the cell membrane, serving as an ATP-driven molecular motor driving the stepwise translocation of polypeptide chains across the membrane. The polypeptide is Protein translocase subunit SecA 1 (Streptococcus gordonii).